The sequence spans 617 residues: Proline--tRNA ligase (617 aa).

The protein belongs to the class-II aminoacyl-tRNA synthetase family. ProS type 1 subfamily. Homodimer.

Its subcellular location is the cytoplasm. It carries out the reaction tRNA(Pro) + L-proline + ATP = L-prolyl-tRNA(Pro) + AMP + diphosphate. Catalyzes the attachment of proline to tRNA(Pro) in a two-step reaction: proline is first activated by ATP to form Pro-AMP and then transferred to the acceptor end of tRNA(Pro). As ProRS can inadvertently accommodate and process non-cognate amino acids such as alanine and cysteine, to avoid such errors it has two additional distinct editing activities against alanine. One activity is designated as 'pretransfer' editing and involves the tRNA(Pro)-independent hydrolysis of activated Ala-AMP. The other activity is designated 'posttransfer' editing and involves deacylation of mischarged Ala-tRNA(Pro). The misacylated Cys-tRNA(Pro) is not edited by ProRS. This Streptococcus agalactiae serotype III (strain NEM316) protein is Proline--tRNA ligase.